We begin with the raw amino-acid sequence, 140 residues long: Large ribosomal subunit protein uL11 (140 aa).

This sequence belongs to the universal ribosomal protein uL11 family. Part of the ribosomal stalk of the 50S ribosomal subunit. Interacts with L10 and the large rRNA to form the base of the stalk. L10 forms an elongated spine to which L12 dimers bind in a sequential fashion forming a multimeric L10(L12)X complex. In terms of processing, one or more lysine residues are methylated.

In terms of biological role, forms part of the ribosomal stalk which helps the ribosome interact with GTP-bound translation factors. This chain is Large ribosomal subunit protein uL11, found in Oleidesulfovibrio alaskensis (strain ATCC BAA-1058 / DSM 17464 / G20) (Desulfovibrio alaskensis).